A 1069-amino-acid chain; its full sequence is Enteropeptidase (1069 aa).

Topologically, residues 1–18 (MKSSRDEAVGHHSISSFE) are cytoplasmic. Residues 19 to 47 (VMLSALFIMLMVFSIGLIAVSWLAVKESE) traverse the membrane as a helical; Signal-anchor for type II membrane protein segment. At 48–1069 (GDAALGKSHE…FIEWIHSFLH (1022 aa)) the chain is on the extracellular side. Positions 54 to 169 (KSHEVRGTFK…NSIDITASLS (116 aa)) constitute an SEA domain. Asparagine 147, asparagine 197, and asparagine 212 each carry an N-linked (GlcNAc...) asparagine glycan. In terms of domain architecture, LDL-receptor class A 1 spans 227–268 (IECQPGSRPCAHAWNCVATDLFCDGEVNCPDGSDEDTGLCAT). Intrachain disulfides connect cysteine 229–cysteine 242, cysteine 236–cysteine 255, cysteine 249–cysteine 266, and cysteine 270–cysteine 298. The CUB 1 domain occupies 270–379 (CDGRFLLTGD…IGFNATYSTF (110 aa)). 6 N-linked (GlcNAc...) asparagine glycosylation sites follow: asparagine 373, asparagine 380, asparagine 433, asparagine 515, asparagine 579, and asparagine 675. Residues 387 to 549 (YEKIDCTFDD…ISLTNGICSQ (163 aa)) form the MAM domain. A disulfide bond links cysteine 569 and cysteine 597. The region spanning 569–679 (CGGPFELWEP…KGFKANFTSG (111 aa)) is the CUB 2 domain. In terms of domain architecture, LDL-receptor class A 2 spans 686–724 (EPCQDDEFQCKDGNCIPLGNLCDSYPHCRDGSDEASCVR). Disulfide bonds link cysteine 688–cysteine 700, cysteine 695–cysteine 713, and cysteine 707–cysteine 722. The SRCR domain maps to 723 to 816 (VRFLNGTRSN…LILLQCNHKS (94 aa)). Residues asparagine 727, asparagine 751, asparagine 770, and asparagine 791 are each glycosylated (N-linked (GlcNAc...) asparagine). Disulfide bonds link cysteine 802-cysteine 812, cysteine 817-cysteine 945, cysteine 859-cysteine 875, cysteine 959-cysteine 1027, cysteine 991-cysteine 1006, and cysteine 1017-cysteine 1045. The Peptidase S1 domain occupies 830-1069 (IVGGSDAQAG…FIEWIHSFLH (240 aa)). Histidine 874 (charge relay system) is an active-site residue. Asparagine 897 carries an N-linked (GlcNAc...) asparagine glycan. The active-site Charge relay system is aspartate 925. 2 N-linked (GlcNAc...) asparagine glycosylation sites follow: asparagine 936 and asparagine 999. The active-site Charge relay system is serine 1021.

The protein belongs to the peptidase S1 family. In terms of assembly, heterodimer of a catalytic (light) chain and a multidomain (heavy) chain linked by a disulfide bond. Post-translationally, the chains are derived from a single precursor that is cleaved by a trypsin-like protease.

It is found in the membrane. The catalysed reaction is Activation of trypsinogen by selective cleavage of 6-Lys-|-Ile-7 bond.. Its function is as follows. Responsible for initiating activation of pancreatic proteolytic proenzymes (trypsin, chymotrypsin and carboxypeptidase A). It catalyzes the conversion of trypsinogen to trypsin which in turn activates other proenzymes including chymotrypsinogen, procarboxypeptidases, and proelastases. The polypeptide is Enteropeptidase (Tmprss15) (Mus musculus (Mouse)).